The primary structure comprises 515 residues: Maturase K (515 aa).

It belongs to the intron maturase 2 family. MatK subfamily.

It is found in the plastid. It localises to the chloroplast. In terms of biological role, usually encoded in the trnK tRNA gene intron. Probably assists in splicing its own and other chloroplast group II introns. The polypeptide is Maturase K (Larix laricina (Tamarack)).